A 634-amino-acid chain; its full sequence is Frizzled and smoothened-like protein D (634 aa).

The signal sequence occupies residues 1 to 21; sequence MINKFKFYLIFLKLILILVNC. Residues 22 to 257 are Extracellular-facing; that stretch reads QNSLNDYGFG…QMDSVINMSK (236 aa). In terms of domain architecture, FZ spans 34 to 178; the sequence is DESSICTSYI…LTKYGYTANG (145 aa). Asn-126, Asn-168, Asn-215, Asn-243, and Asn-254 each carry an N-linked (GlcNAc...) asparagine glycan. A helical membrane pass occupies residues 258-278; sequence AMSSISFVLSLFNVITFGLLI. Over 279–287 the chain is Cytoplasmic; it reads KKKSKYNVC. A helical transmembrane segment spans residues 288-308; sequence IALMAIGSSFIYLSDIINYGV. At 309–335 the chain is on the extracellular side; it reads GIEKQLCPEPGRVATQRVDSLCGFTGS. Residues 336-356 traverse the membrane as a helical segment; the sequence is IFHIGITLCVLWSMTMGIVLY. Topologically, residues 357 to 368 are cytoplasmic; it reads SKIKQFKLPNFR. The helical transmembrane segment at 369–389 threads the bilayer; it reads YFLIGNLSFTVVTLIILASAK. The Extracellular portion of the chain corresponds to 390 to 410; sequence KFQGGNGFLECWMRDRWYVVA. Residues 411-431 form a helical membrane-spanning segment; it reads IFWIPCGIALLLGVLSICGVI. Residues 432 to 454 are Cytoplasmic-facing; sequence FEIYKISKNVSLKDSKVVIRELK. The helical transmembrane segment at 455–475 threads the bilayer; the sequence is PFVLVVTVSASLIYLFVFYFD. Residues 476-513 lie on the Extracellular side of the membrane; that stretch reads SESKYDFYKKGVEDYILCLLTSENPLDECYTVGPNFNS. Residues 514–534 traverse the membrane as a helical segment; it reads YFMFYFLIRFFGILFFGIFGT. Residues 535-634 are Cytoplasmic-facing; the sequence is SEIARNAWTE…MEIELDSIDI (100 aa). The interval 560 to 624 is disordered; the sequence is VSSSTRGGGG…NNNNNDNNNK (65 aa). Low complexity-rich tracts occupy residues 572–592 and 609–622; these read SGIK…NNST and DNTI…NDNN.

Belongs to the G-protein coupled receptor Fz/Smo family.

Its subcellular location is the membrane. This is Frizzled and smoothened-like protein D (fslD) from Dictyostelium discoideum (Social amoeba).